Consider the following 226-residue polypeptide: Beta-casein (226 aa).

Positions 1–51 are disordered; sequence REKEELNVSSETVESLSSNEPDSSSEESITHINKEKSQKFKHEGQQQREVE. Residue serine 9 is modified to Phosphoserine. At threonine 12 the chain carries Phosphothreonine. Phosphoserine is present on residues serine 15, serine 17, serine 18, and serine 25. The segment covering 28-51 has biased composition (basic and acidic residues); the sequence is SITHINKEKSQKFKHEGQQQREVE.

Belongs to the beta-casein family. In terms of processing, there are at least three different forms found in milk, with varying degrees of phosphorylation. These include form 5-P which is phosphorylated at three sites, this form is present in low amounts, form 6-P which is phosphorylated at six sites, and form 7-P which is phosphorylated at seven sites. Mammary gland specific. Secreted in milk.

The protein localises to the secreted. In terms of biological role, important role in determination of the surface properties of the casein micelles. This chain is Beta-casein, found in Equus asinus (Donkey).